A 93-amino-acid polypeptide reads, in one-letter code: Guanine nucleotide-binding protein subunit gamma 1 (93 aa).

The stretch at 12 to 52 (TRGRHRIQAELKKLEQEARFLEEELEELDKTDKVSAALQEL) forms a coiled coil. In terms of domain architecture, G protein gamma spans 20–93 (AELKKLEQEA…DLRRCKCWFL (74 aa)). Cys88 is lipidated: S-palmitoyl cysteine. Residue Cys90 is modified to Cysteine methyl ester. Cys90 carries the S-farnesyl cysteine lipid modification. A propeptide spans 91-93 (WFL) (removed in mature form).

In terms of assembly, g proteins are composed of 3 units, alpha, beta and gamma. Interacts with the beta subunit RGB1.

The protein resides in the cell membrane. Its function is as follows. Guanine nucleotide-binding proteins (G proteins) are involved as modulators or transducers in various transmembrane signaling systems. This chain is Guanine nucleotide-binding protein subunit gamma 1, found in Oryza sativa subsp. indica (Rice).